Consider the following 462-residue polypeptide: MAKEYSTISRIYGPLMIVEGVKGVAYGEVVEIETEWGEKRKGQVLDARENLAIVQVFEGTRDLDIKTTRVRFTGETLKVPVSMDMLGRIFNGIGKPIDGGPEIIPEDRRDVHGAPLNPVARAYPRDFIQTGISAIDGMNTLVRGQKLPIFSGSGLPHNKLAAQIARQAKVLGEEESFAVVFAAMGITYEEANFFKKSFEETGAIERAVLFLNLADDPAIERIITPRMALTVAEYLAFDYDMHVLVILTDMTNYCEALREISAAREEVPGRRGYPGYMYTDLATIYERAGRVRGKKGSITQMPILTMPDDDITHPIPDLTGYITEGQIVLSRDLHRRGIYPPIDVLPSLSRLMKDGIGKGRTREDHPQLAQQLYAAYAEGRSLRDLVAVVGEEALSETDKKYLEFADRFEREFVAQGYDEDRSIEETLDLGWELLAILPETELKRVKKEMIMKYHPKYRGRSS.

It belongs to the ATPase alpha/beta chains family. As to quaternary structure, has multiple subunits with at least A(3), B(3), C, D, E, F, H, I and proteolipid K(x).

The protein resides in the cell membrane. Its function is as follows. Component of the A-type ATP synthase that produces ATP from ADP in the presence of a proton gradient across the membrane. The B chain is a regulatory subunit. This is A-type ATP synthase subunit B from Pyrococcus furiosus (strain ATCC 43587 / DSM 3638 / JCM 8422 / Vc1).